We begin with the raw amino-acid sequence, 144 residues long: Large ribosomal subunit protein uL15 (144 aa).

A disordered region spans residues 1 to 58; that stretch reads MKLNNLSPAPGSKHAEKRVGRGIGSGLGKTGGRGHKGQKSRSGGSVKPGFEGGQMPLQ. Positions 21–31 are enriched in gly residues; it reads RGIGSGLGKTG.

This sequence belongs to the universal ribosomal protein uL15 family. In terms of assembly, part of the 50S ribosomal subunit.

Binds to the 23S rRNA. This chain is Large ribosomal subunit protein uL15, found in Chromohalobacter salexigens (strain ATCC BAA-138 / DSM 3043 / CIP 106854 / NCIMB 13768 / 1H11).